Here is a 65-residue protein sequence, read N- to C-terminus: Stress-associated endoplasmic reticulum protein 2 (65 aa).

Residues 38 to 58 (GPWLLALFVFVVCGSAIFQII) form a helical membrane-spanning segment.

It belongs to the RAMP4 family. In terms of assembly, interacts with SEC61B, SEC61A1 and the SEC61 complex. Interacts with CANX.

The protein resides in the membrane. It localises to the endoplasmic reticulum membrane. Functionally, interacts with target proteins during their translocation into the lumen of the endoplasmic reticulum. Protects unfolded target proteins against degradation during ER stress. May facilitate glycosylation of target proteins after termination of ER stress. May modulate the use of N-glycosylation sites on target proteins. The chain is Stress-associated endoplasmic reticulum protein 2 (SERP2) from Bos taurus (Bovine).